A 274-amino-acid polypeptide reads, in one-letter code: MMIVYKGEKMQFIRVNTLKINPEVLKKRLENKGVVLEKTFLDYAFEVKKSPFSIGSTPEYLFGYYMPQSISSMIPPIVLNPREDDFILDMCAAPGGKTTHLAQLMKNKGTIVAVEISKTRTKALKSNINRMGVLNTIIINADMRKYKDYLLKNEIFFDKILLDAPCSGNIIKDKNRNVSEEDIKYCSLRQKELIDIGIDLLKKDGELVYSTCSMEVEENEEVIKYILQKRNDVELIIIKANEFKGINIKEGYIKGTLRVFPPNEPFFIAKLRKI.

S-adenosyl-L-methionine contacts are provided by residues 91–97 (CAAPGGK), E115, R120, D142, D163, N169, and R189. The active-site Nucleophile is C212.

This sequence belongs to the class I-like SAM-binding methyltransferase superfamily. RsmB/NOP family.

It localises to the cytoplasm. It catalyses the reaction cytidine(48) in tRNA precursor + S-adenosyl-L-methionine = 5-methylcytidine(48) in tRNA precursor + S-adenosyl-L-homocysteine + H(+). The enzyme catalyses cytidine(40) in tRNA precursor + S-adenosyl-L-methionine = 5-methylcytidine(40) in tRNA precursor + S-adenosyl-L-homocysteine + H(+). Its function is as follows. Catalyzes AdoMet-dependent formation of m5C in tRNA. Cytidine residue at either position 40 or position 48 is likely to be methylated. The sequence is that of tRNA (cytosine(48)-C(5))-methyltransferase (trm4) from Methanocaldococcus jannaschii (strain ATCC 43067 / DSM 2661 / JAL-1 / JCM 10045 / NBRC 100440) (Methanococcus jannaschii).